We begin with the raw amino-acid sequence, 201 residues long: ATP-dependent Clp protease proteolytic subunit 2 (201 aa).

The Nucleophile role is filled by Ser101. His126 is an active-site residue.

Belongs to the peptidase S14 family. As to quaternary structure, fourteen ClpP subunits assemble into 2 heptameric rings which stack back to back to give a disk-like structure with a central cavity, resembling the structure of eukaryotic proteasomes.

The protein resides in the cytoplasm. It carries out the reaction Hydrolysis of proteins to small peptides in the presence of ATP and magnesium. alpha-casein is the usual test substrate. In the absence of ATP, only oligopeptides shorter than five residues are hydrolyzed (such as succinyl-Leu-Tyr-|-NHMec, and Leu-Tyr-Leu-|-Tyr-Trp, in which cleavage of the -Tyr-|-Leu- and -Tyr-|-Trp bonds also occurs).. In terms of biological role, cleaves peptides in various proteins in a process that requires ATP hydrolysis. Has a chymotrypsin-like activity. Plays a major role in the degradation of misfolded proteins. This chain is ATP-dependent Clp protease proteolytic subunit 2, found in Prochlorococcus marinus subsp. pastoris (strain CCMP1986 / NIES-2087 / MED4).